Reading from the N-terminus, the 132-residue chain is Long-chain acyl-CoA thioesterase FadM (132 aa).

Asp-13 is a catalytic residue.

This sequence belongs to the 4-hydroxybenzoyl-CoA thioesterase family. In terms of assembly, homotetramer.

The enzyme catalyses (3E,5Z)-tetradecadienoyl-CoA + H2O = (3E,5Z)-tetradecadienoate + CoA + H(+). It carries out the reaction (3E,5Z)-dodecadienoyl-CoA + H2O = (3E,5Z)-dodecadienoate + CoA + H(+). It catalyses the reaction (9Z)-octadecenoyl-CoA + H2O = (9Z)-octadecenoate + CoA + H(+). The catalysed reaction is octadecanoyl-CoA + H2O = octadecanoate + CoA + H(+). The enzyme catalyses hexadecanoyl-CoA + H2O = hexadecanoate + CoA + H(+). It carries out the reaction (3S)-hydroxytetradecanoyl-CoA + H2O = (3S)-hydroxytetradecanoate + CoA + H(+). It catalyses the reaction tetradecanoyl-CoA + H2O = tetradecanoate + CoA + H(+). Functionally, long-chain acyl-CoA thioesterase that could be involved in beta-oxidation of fatty acids. Is most active with 3,5-tetradecadienoyl-CoA, a metabolite of oleic acid that is hydrolyzed during oleate beta-oxidation, but can also use other substrates such as 3,5-dodecadienoyl-CoA, 9-cis-octadecenoyl-CoA, octadecanoyl-CoA, hexadecanoyl-CoA, 3-hydroxytetradecanoyl-CoA and tetradecanoyl-CoA. The sequence is that of Long-chain acyl-CoA thioesterase FadM from Escherichia coli (strain K12).